Consider the following 143-residue polypeptide: Large ribosomal subunit protein uL11 (143 aa).

It belongs to the universal ribosomal protein uL11 family. In terms of assembly, part of the ribosomal stalk of the 50S ribosomal subunit. Interacts with L10 and the large rRNA to form the base of the stalk. L10 forms an elongated spine to which L12 dimers bind in a sequential fashion forming a multimeric L10(L12)X complex. Post-translationally, one or more lysine residues are methylated.

Forms part of the ribosomal stalk which helps the ribosome interact with GTP-bound translation factors. This is Large ribosomal subunit protein uL11 from Pseudomonas fluorescens (strain SBW25).